The sequence spans 686 residues: Rhophilin-2 (686 aa).

Residues 26-100 (NPLAQTGRSK…LEGLNISVGV (75 aa)) enclose the REM-1 domain. The tract at residues 46 to 66 (QILKAVRMRTGAENLLKVATN) is interaction with Rho. The BRO1 domain maps to 111–502 (PLIPLGLKET…TDFFQKLGPL (392 aa)). In terms of domain architecture, PDZ spans 515–593 (RGIHFTVEEG…EEVEMKVVSL (79 aa)). Threonine 655 is modified (phosphothreonine).

It belongs to the RHPN family. In terms of assembly, interacts with GTP-bound RhoA and RhoB. Interacts with both GTP- and GDP-bound RhoA. Interacts with KRT18.

It is found in the cytoplasm. The protein localises to the perinuclear region. Binds specifically to GTP-Rho. May function in a Rho pathway to limit stress fiber formation and/or increase the turnover of F-actin structures in the absence of high levels of RhoA activity. In Mus musculus (Mouse), this protein is Rhophilin-2 (Rhpn2).